A 167-amino-acid polypeptide reads, in one-letter code: Large ribosomal subunit protein uL23 (167 aa).

The large ribosomal subunit protein uL23 stretch occupies residues 1-118 (MNVNEIIKGP…TEEKAKIAKK (118 aa)). Disordered regions lie at residues 91–112 (FEDESPQDQKDSETVSENTEEK) and 136–167 (KQAELAKKDSETNENQEKRIENQTENQENSAN). Basic and acidic residues-rich tracts occupy residues 97-112 (QDQKDSETVSENTEEK) and 136-157 (KQAELAKKDSETNENQEKRIEN). Positions 119 to 167 (KAELEAKNKEIAEKLAKKQAELAKKDSETNENQEKRIENQTENQENSAN) are unknown. Residues 158–167 (QTENQENSAN) are compositionally biased toward polar residues.

This sequence belongs to the universal ribosomal protein uL23 family. As to quaternary structure, part of the 50S ribosomal subunit. Contacts protein L29, and trigger factor when it is bound to the ribosome.

Functionally, one of the early assembly proteins it binds 23S rRNA. One of the proteins that surrounds the polypeptide exit tunnel on the outside of the ribosome. Forms the main docking site for trigger factor binding to the ribosome. The chain is Large ribosomal subunit protein uL23 from Mesomycoplasma hyopneumoniae (strain J / ATCC 25934 / NCTC 10110) (Mycoplasma hyopneumoniae).